The chain runs to 247 residues: Large ribosomal subunit protein uL30 (247 aa).

The protein belongs to the universal ribosomal protein uL30 family.

This is Large ribosomal subunit protein uL30 (RPL7L1) from Sus scrofa (Pig).